Reading from the N-terminus, the 241-residue chain is Probable transcriptional regulatory protein Reut_A2522 (241 aa).

Belongs to the TACO1 family.

Its subcellular location is the cytoplasm. The sequence is that of Probable transcriptional regulatory protein Reut_A2522 from Cupriavidus pinatubonensis (strain JMP 134 / LMG 1197) (Cupriavidus necator (strain JMP 134)).